A 512-amino-acid polypeptide reads, in one-letter code: mRNA export factor (512 aa).

A disordered region spans residues 1 to 242 (MATDIDMLID…PVPERKAPSA (242 aa)). Positions 5-17 (IDMLIDLGLDLSD) match the Nuclear export signal motif. A phosphoserine; by host mark is found at Ser-16 and Ser-18. 2 stretches are compositionally biased toward acidic residues: residues 16–28 (SDSE…LERD) and 36–55 (PESD…EDPC). The interval 104 to 112 (VWSRLGTRR) is interaction with host ALYREF. Residues 110 to 138 (TRRSASPREPHGGKVARIQPPSTKAPHPR) carry the Nuclear localization signal motif. Ser-113 carries the post-translational modification Phosphoserine; by host. Over residues 135–149 (PHPRGGRRGRRRGRG) the composition is skewed to basic residues. At Arg-138 the chain carries Dimethylated arginine; by host. The tract at residues 138 to 152 (RGGRRGRRRGRGRYG) is RGG-box. At Arg-148 the chain carries Omega-N-methylarginine; by host. Arg-150 carries the post-translational modification Dimethylated arginine; by host. The segment covering 228–240 (ADGRAPVPERKAP) has biased composition (basic and acidic residues). Zn(2+)-binding residues include Cys-400, His-479, Cys-483, and Cys-488. The segment at 400–488 (CYLKARGLCG…HRQECSSRVC (89 aa)) adopts a CHC2-type zinc-finger fold.

The protein belongs to the HHV-1 ICP27 protein family. Interacts with host RBP1; this interaction facilitates the RNA polymerase recruitment to viral transcription sites. Interacts (via the RGG box) with host ALYREF/THOC4; this interaction recruits ALYREF to viral replication compartments and probably directs viral mRNA to the TAP/NFX1 pathway. Interacts (via the RGG box) with host SRPK1; this interaction relocalizes SRPK1 to the nucleus and seems to alter its activity. Interacts with ICP4; this interaction modulates ICP4 DNA-binding activity. Interacts with host NXF1; this interaction allows efficient export of HSV-1 early and late transcripts. Interacts with host IRF3; this interaction inhibits IRF3 phosphorylation and nuclear translocation. Methylated within the RGG box possibly by host PRMT1. When hypomethylated, ICP27 is exported to the cytoplasm earlier and more rapidly. In terms of processing, phosphorylated.

The protein resides in the host cytoplasm. It localises to the host nucleus. Multifunctional regulator of the expression of viral genes that contributes to the shutoff of host protein synthesis and mediates nuclear export of viral intronless mRNAs. Also stimulates translation of viral transcripts. Independently, plays a role in the regulation of virion release. Also plays a role in the inhibition of host innate immune response by targeting host IRF3 and thereby preventing production of beta-interferon. Silences the 3' splice site of the host promyelocytic leukemia (PML) intron 7a, thereby switching PML isoforms from PML-II to PML-V. This could be linked to the accelerated mRNA export induced by ICP27 which might not provide sufficient time for PML pre-mRNA to be spliced in the nucleus. Also suppresses splicing of the viral ICP34.5 mRNA, allowing the virus to express a variant form of ICP34.5. This Human herpesvirus 2 (strain HG52) (HHV-2) protein is mRNA export factor.